The primary structure comprises 257 residues: NAD-capped RNA hydrolase NudC (257 aa).

Residue Arg69 participates in substrate binding. The Zn(2+) site is built by Cys98 and Cys101. Residue Glu111 coordinates substrate. Zn(2+)-binding residues include Cys116 and Cys119. Tyr124 lines the substrate pocket. Residues 125–248 (PQIAPCIIVA…TVARRLIEDT (124 aa)) form the Nudix hydrolase domain. A divalent metal cation-binding residues include Ala158, Glu174, and Glu178. The Nudix box motif lies at 159–180 (GFVEVGETLEQAVAREVMEESG). 192-199 (QPWPFPQS) is a substrate binding site. Glu219 contacts a divalent metal cation. Position 241 (Ala241) interacts with substrate.

It belongs to the Nudix hydrolase family. NudC subfamily. As to quaternary structure, homodimer. The cofactor is Mg(2+). It depends on Mn(2+) as a cofactor. Zn(2+) serves as cofactor.

It carries out the reaction a 5'-end NAD(+)-phospho-ribonucleoside in mRNA + H2O = a 5'-end phospho-adenosine-phospho-ribonucleoside in mRNA + beta-nicotinamide D-ribonucleotide + 2 H(+). It catalyses the reaction NAD(+) + H2O = beta-nicotinamide D-ribonucleotide + AMP + 2 H(+). The catalysed reaction is NADH + H2O = reduced beta-nicotinamide D-ribonucleotide + AMP + 2 H(+). In terms of biological role, mRNA decapping enzyme that specifically removes the nicotinamide adenine dinucleotide (NAD) cap from a subset of mRNAs by hydrolyzing the diphosphate linkage to produce nicotinamide mononucleotide (NMN) and 5' monophosphate mRNA. The NAD-cap is present at the 5'-end of some mRNAs and stabilizes RNA against 5'-processing. Has preference for mRNAs with a 5'-end purine. Catalyzes the hydrolysis of a broad range of dinucleotide pyrophosphates. The protein is NAD-capped RNA hydrolase NudC of Klebsiella pneumoniae subsp. pneumoniae (strain ATCC 700721 / MGH 78578).